We begin with the raw amino-acid sequence, 565 residues long: MRSDTIKTGFEKAPHRSLLKATGTIKEKGDYRKPFIGICNSFNELIPGHAHLQELGRIAKEEVRKAGGVPFEFNTIGVCDGIAMGHIGMRYSLASRELIADSVETVAEAHRLDGLVCIPNCDKITPGMMMAALRINIPVIFVSGGPMKAGCTPSGKTVDLISVFEAVGQHSTGEISEQELESIEENACPGCGSCSGMFTANSMNCLSEALGFALPGNGTILAVDPRRNELVREASRQIITLVKNNVRPRDILSREALLNAFALDFAMGGSTNTILHTLAIANEAELDFDFSELNALSARTPYICKVSPATMAVHIEDVDRAGGISAILHELSKVEGLLDLSVPTVTGHTLGENIADAEVKDRSVIRSVEDPYSATGGLCVLYGNLAPQGSVIKTGAVSAPMMKHTGPAKVYDCQDDAIKGIMEGEVKSGDVVVIRYEGPKGGPGMPEMLSPTSVIMGRGLGDSVALITDGRFSGGSRGACIGHISPEAAEKGPIAALQNGDTITIDIPGRTISVDLTDEDIASRIAALPDFQPKIKKGYLARYSQMVTSASTGAILKTPVSCEPK.

Residue Asp-80 participates in Mg(2+) binding. Cys-121 lines the [2Fe-2S] cluster pocket. Residues Asp-122 and Lys-123 each contribute to the Mg(2+) site. Position 123 is an N6-carboxylysine (Lys-123). Cys-194 serves as a coordination point for [2Fe-2S] cluster. Glu-447 contributes to the Mg(2+) binding site. The active-site Proton acceptor is Ser-473.

This sequence belongs to the IlvD/Edd family. As to quaternary structure, homodimer. [2Fe-2S] cluster serves as cofactor. Mg(2+) is required as a cofactor.

The enzyme catalyses (2R)-2,3-dihydroxy-3-methylbutanoate = 3-methyl-2-oxobutanoate + H2O. It carries out the reaction (2R,3R)-2,3-dihydroxy-3-methylpentanoate = (S)-3-methyl-2-oxopentanoate + H2O. It participates in amino-acid biosynthesis; L-isoleucine biosynthesis; L-isoleucine from 2-oxobutanoate: step 3/4. It functions in the pathway amino-acid biosynthesis; L-valine biosynthesis; L-valine from pyruvate: step 3/4. In terms of biological role, functions in the biosynthesis of branched-chain amino acids. Catalyzes the dehydration of (2R,3R)-2,3-dihydroxy-3-methylpentanoate (2,3-dihydroxy-3-methylvalerate) into 2-oxo-3-methylpentanoate (2-oxo-3-methylvalerate) and of (2R)-2,3-dihydroxy-3-methylbutanoate (2,3-dihydroxyisovalerate) into 2-oxo-3-methylbutanoate (2-oxoisovalerate), the penultimate precursor to L-isoleucine and L-valine, respectively. The sequence is that of Dihydroxy-acid dehydratase from Chlorobium phaeovibrioides (strain DSM 265 / 1930) (Prosthecochloris vibrioformis (strain DSM 265)).